We begin with the raw amino-acid sequence, 608 residues long: 25S rRNA (cytosine-C(5))-methyltransferase nop2 (608 aa).

2 disordered regions span residues 1-130 and 145-169; these read MGRK…SGDE and LDEE…PEAP. The span at 16–29 shows a compositional bias: basic and acidic residues; that stretch reads EENHNSSHKVTENA. A compositionally biased stretch (basic residues) spans 30-45; sequence KKRKHSKEKPQNSRKR. 2 positions are modified to phosphoserine: serine 58 and serine 60. 2 stretches are compositionally biased toward acidic residues: residues 68 to 116 and 147 to 158; these read DADE…SDEE and EEAELEEKEAEE. S-adenosyl-L-methionine is bound by residues 347-353, aspartate 371, aspartate 398, and aspartate 416; that span reads SSAPGGK. The active-site Nucleophile is the cysteine 473.

Belongs to the class I-like SAM-binding methyltransferase superfamily. RsmB/NOP family.

The protein resides in the nucleus. The protein localises to the nucleolus. The enzyme catalyses a cytidine in 25S rRNA + S-adenosyl-L-methionine = a 5-methylcytidine in 25S rRNA + S-adenosyl-L-homocysteine + H(+). Its function is as follows. S-adenosyl-L-methionine-dependent methyltransferase that specifically methylates the C(5) position of a cytosine in 25S rRNA. Required for 60S ribosomal subunit synthesis and processing. This chain is 25S rRNA (cytosine-C(5))-methyltransferase nop2 (nop2), found in Schizosaccharomyces pombe (strain 972 / ATCC 24843) (Fission yeast).